We begin with the raw amino-acid sequence, 146 residues long: MDNYKKILVALALDPNSDRPLVEKAKELSANRDAQLYLIHAVEHLSSYGAAYGVAAGVDVEDMLLEEAKKRMNEIASQLNISSDHQIVKVGPAKFLILEQAKNWGVDLIIVGSHGRHGIQLLLGSTSNAVLHGAKCDVLAVRIKGS.

This sequence belongs to the universal stress protein A family. As to quaternary structure, homodimer.

The protein resides in the cytoplasm. Its function is as follows. Involved in stress response. This is Universal stress protein A homolog 2 (uspA2) from Coxiella burnetii (strain RSA 493 / Nine Mile phase I).